A 198-amino-acid polypeptide reads, in one-letter code: GTP cyclohydrolase-2 (198 aa).

A GTP-binding site is contributed by 52–56 (RMHSE). Zn(2+) contacts are provided by Cys-57, Cys-68, and Cys-70. GTP-binding positions include Gln-73, 94 to 96 (EGR), and Thr-116. Asp-128 (proton acceptor) is an active-site residue. Arg-130 (nucleophile) is an active-site residue. The GTP site is built by Thr-151 and Lys-156.

It belongs to the GTP cyclohydrolase II family. Requires Zn(2+) as cofactor.

The catalysed reaction is GTP + 4 H2O = 2,5-diamino-6-hydroxy-4-(5-phosphoribosylamino)-pyrimidine + formate + 2 phosphate + 3 H(+). The protein operates within cofactor biosynthesis; riboflavin biosynthesis; 5-amino-6-(D-ribitylamino)uracil from GTP: step 1/4. Its function is as follows. Catalyzes the conversion of GTP to 2,5-diamino-6-ribosylamino-4(3H)-pyrimidinone 5'-phosphate (DARP), formate and pyrophosphate. The sequence is that of GTP cyclohydrolase-2 from Vibrio vulnificus (strain CMCP6).